Reading from the N-terminus, the 261-residue chain is Zinc finger protein 664 (261 aa).

C2H2-type zinc fingers lie at residues 3–25 (YKCPMCREFFSERADLFMHQKIH), 31–53 (HKCDKCDKGFFHISELHIHWRDH), 59–81 (YKCDDCVKDFSTTTKLNRHKKIH), 87–109 (YKCYECGKAFNWSSHLQIHMRVH), 115–137 (YVCSECGRGFSNSSNLCMHQRVH), 143–165 (FKCEECGKAFRHTSSLCMHQRVH), 171–193 (YKCYECGKAFSQSSSLCIHQRVH), 199–221 (YRCCGCGKAFSQSSSLCIHQRVH), and 227–249 (FKCDECGKAFSQSTSLCIHQRVH). K257 is covalently cross-linked (Glycyl lysine isopeptide (Lys-Gly) (interchain with G-Cter in SUMO2)).

This sequence belongs to the krueppel C2H2-type zinc-finger protein family.

It is found in the nucleus. Its function is as follows. May be involved in transcriptional regulation. In Mus musculus (Mouse), this protein is Zinc finger protein 664 (Znf664).